Reading from the N-terminus, the 241-residue chain is Small ribosomal subunit protein uS3 (241 aa).

The region spanning 39–107 (MRKFVMDELK…ETHLNIVEVR (69 aa)) is the KH type-2 domain. Residues 214–241 (ASERRALEGDAQGPASRDRDRDRRRDNA) are disordered. Positions 229 to 241 (SRDRDRDRRRDNA) are enriched in basic and acidic residues.

The protein belongs to the universal ribosomal protein uS3 family. Part of the 30S ribosomal subunit. Forms a tight complex with proteins S10 and S14.

Binds the lower part of the 30S subunit head. Binds mRNA in the 70S ribosome, positioning it for translation. This is Small ribosomal subunit protein uS3 from Rhizobium rhizogenes (strain K84 / ATCC BAA-868) (Agrobacterium radiobacter).